Here is a 429-residue protein sequence, read N- to C-terminus: Tol-Pal system protein TolB (429 aa).

Residues 1 to 28 form the signal peptide; it reads MSITPSFSRRSVVSLLAAGAFSSMSAFA.

This sequence belongs to the TolB family. The Tol-Pal system is composed of five core proteins: the inner membrane proteins TolA, TolQ and TolR, the periplasmic protein TolB and the outer membrane protein Pal. They form a network linking the inner and outer membranes and the peptidoglycan layer.

It localises to the periplasm. Functionally, part of the Tol-Pal system, which plays a role in outer membrane invagination during cell division and is important for maintaining outer membrane integrity. The protein is Tol-Pal system protein TolB of Polaromonas naphthalenivorans (strain CJ2).